The primary structure comprises 196 residues: Probable GTP-binding protein EngB (196 aa).

The 173-residue stretch at 24-196 (ELSEVALSGR…IWNLIEPYIS (173 aa)) folds into the EngB-type G domain. GTP contacts are provided by residues 32–39 (GRSNVGKS), 59–63 (GKTQT), 77–80 (DVPG), 144–147 (TKED), and 176–178 (YSS). The Mg(2+) site is built by serine 39 and threonine 61.

The protein belongs to the TRAFAC class TrmE-Era-EngA-EngB-Septin-like GTPase superfamily. EngB GTPase family. It depends on Mg(2+) as a cofactor.

Necessary for normal cell division and for the maintenance of normal septation. This is Probable GTP-binding protein EngB from Staphylococcus aureus (strain Mu3 / ATCC 700698).